Consider the following 460-residue polypeptide: tRNA modification GTPase MnmE (460 aa).

3 residues coordinate (6S)-5-formyl-5,6,7,8-tetrahydrofolate: R26, E88, and R127. Positions 222–381 (GLKVAIVGRP…LESAILSKVQ (160 aa)) constitute a TrmE-type G domain. Position 232 (N232) interacts with K(+). GTP is bound by residues 232 to 237 (NVGKSS), 251 to 257 (TELPGTT), and 276 to 279 (DTAG). S236 provides a ligand contact to Mg(2+). Residues T251, L253, and T256 each contribute to the K(+) site. Position 257 (T257) interacts with Mg(2+). (6S)-5-formyl-5,6,7,8-tetrahydrofolate is bound at residue K460.

This sequence belongs to the TRAFAC class TrmE-Era-EngA-EngB-Septin-like GTPase superfamily. TrmE GTPase family. In terms of assembly, homodimer. Heterotetramer of two MnmE and two MnmG subunits. Requires K(+) as cofactor.

It is found in the cytoplasm. Functionally, exhibits a very high intrinsic GTPase hydrolysis rate. Involved in the addition of a carboxymethylaminomethyl (cmnm) group at the wobble position (U34) of certain tRNAs, forming tRNA-cmnm(5)s(2)U34. This is tRNA modification GTPase MnmE from Cyanothece sp. (strain PCC 7425 / ATCC 29141).